A 413-amino-acid chain; its full sequence is Serine hydroxymethyltransferase (413 aa).

(6S)-5,6,7,8-tetrahydrofolate contacts are provided by residues leucine 117 and 121–123; that span reads GHL. Residue lysine 226 is modified to N6-(pyridoxal phosphate)lysine. (6S)-5,6,7,8-tetrahydrofolate contacts are provided by residues glutamate 239 and 349-351; that span reads SPF.

It belongs to the SHMT family. As to quaternary structure, homodimer. Requires pyridoxal 5'-phosphate as cofactor.

The protein resides in the cytoplasm. It carries out the reaction (6R)-5,10-methylene-5,6,7,8-tetrahydrofolate + glycine + H2O = (6S)-5,6,7,8-tetrahydrofolate + L-serine. The protein operates within one-carbon metabolism; tetrahydrofolate interconversion. It participates in amino-acid biosynthesis; glycine biosynthesis; glycine from L-serine: step 1/1. Functionally, catalyzes the reversible interconversion of serine and glycine with tetrahydrofolate (THF) serving as the one-carbon carrier. This reaction serves as the major source of one-carbon groups required for the biosynthesis of purines, thymidylate, methionine, and other important biomolecules. Also exhibits THF-independent aldolase activity toward beta-hydroxyamino acids, producing glycine and aldehydes, via a retro-aldol mechanism. This is Serine hydroxymethyltransferase from Bacillus anthracis (strain A0248).